The chain runs to 1420 residues: DNA-directed RNA polymerase subunit beta' (1420 aa).

Cys-70, Cys-72, Cys-85, and Cys-88 together coordinate Zn(2+). Mg(2+) is bound by residues Asp-464, Asp-466, and Asp-468. Cys-823, Cys-897, Cys-904, and Cys-907 together coordinate Zn(2+).

It belongs to the RNA polymerase beta' chain family. The RNAP catalytic core consists of 2 alpha, 1 beta, 1 beta' and 1 omega subunit. When a sigma factor is associated with the core the holoenzyme is formed, which can initiate transcription. Mg(2+) serves as cofactor. Zn(2+) is required as a cofactor.

It carries out the reaction RNA(n) + a ribonucleoside 5'-triphosphate = RNA(n+1) + diphosphate. Functionally, DNA-dependent RNA polymerase catalyzes the transcription of DNA into RNA using the four ribonucleoside triphosphates as substrates. The sequence is that of DNA-directed RNA polymerase subunit beta' from Polynucleobacter asymbioticus (strain DSM 18221 / CIP 109841 / QLW-P1DMWA-1) (Polynucleobacter necessarius subsp. asymbioticus).